The sequence spans 238 residues: NAD(P)H-hydrate epimerase (238 aa).

The YjeF N-terminal domain maps to 10-225 (AIKVDQILFN…ALQRQYELNL (216 aa)). 68-72 (NNGGD) lines the (6S)-NADPHX pocket. Positions 69 and 133 each coordinate K(+). (6S)-NADPHX contacts are provided by residues 137–143 (GFSFKPP) and aspartate 166. K(+) is bound at residue serine 169.

This sequence belongs to the NnrE/AIBP family. It depends on K(+) as a cofactor.

It carries out the reaction (6R)-NADHX = (6S)-NADHX. The enzyme catalyses (6R)-NADPHX = (6S)-NADPHX. Functionally, catalyzes the epimerization of the S- and R-forms of NAD(P)HX, a damaged form of NAD(P)H that is a result of enzymatic or heat-dependent hydration. This is a prerequisite for the S-specific NAD(P)H-hydrate dehydratase to allow the repair of both epimers of NAD(P)HX. The protein is NAD(P)H-hydrate epimerase of Drosophila willistoni (Fruit fly).